Reading from the N-terminus, the 284-residue chain is Avenin-like b4 (284 aa).

An N-terminal signal peptide occupies residues 1-18 (MKVFILALLALTATTAIA).

This sequence belongs to the prolamin family. In terms of processing, contains disulfide bonds.

Its function is as follows. Seed storage protein. Might be integrated via inter-chain disulfide bonds within the glutenin polymer. This is Avenin-like b4 from Triticum aestivum (Wheat).